The sequence spans 564 residues: Dihydroxy-acid dehydratase 2 (564 aa).

Cysteine 59 contacts [2Fe-2S] cluster. Aspartate 91 contacts Mg(2+). Cysteine 132 is a binding site for [2Fe-2S] cluster. Positions 133 and 134 each coordinate Mg(2+). Lysine 134 is subject to N6-carboxylysine. Cysteine 204 provides a ligand contact to [2Fe-2S] cluster. Residue glutamate 454 coordinates Mg(2+). Serine 480 functions as the Proton acceptor in the catalytic mechanism.

It belongs to the IlvD/Edd family. As to quaternary structure, homodimer. [2Fe-2S] cluster is required as a cofactor. Mg(2+) serves as cofactor.

It carries out the reaction (2R)-2,3-dihydroxy-3-methylbutanoate = 3-methyl-2-oxobutanoate + H2O. The enzyme catalyses (2R,3R)-2,3-dihydroxy-3-methylpentanoate = (S)-3-methyl-2-oxopentanoate + H2O. The protein operates within amino-acid biosynthesis; L-isoleucine biosynthesis; L-isoleucine from 2-oxobutanoate: step 3/4. Its pathway is amino-acid biosynthesis; L-valine biosynthesis; L-valine from pyruvate: step 3/4. In terms of biological role, functions in the biosynthesis of branched-chain amino acids. Catalyzes the dehydration of (2R,3R)-2,3-dihydroxy-3-methylpentanoate (2,3-dihydroxy-3-methylvalerate) into 2-oxo-3-methylpentanoate (2-oxo-3-methylvalerate) and of (2R)-2,3-dihydroxy-3-methylbutanoate (2,3-dihydroxyisovalerate) into 2-oxo-3-methylbutanoate (2-oxoisovalerate), the penultimate precursor to L-isoleucine and L-valine, respectively. The polypeptide is Dihydroxy-acid dehydratase 2 (Staphylococcus saprophyticus subsp. saprophyticus (strain ATCC 15305 / DSM 20229 / NCIMB 8711 / NCTC 7292 / S-41)).